Reading from the N-terminus, the 139-residue chain is Large ribosomal subunit protein bL9m (139 aa).

Residues 83–121 are disordered; it reads DHQQLSKRHETEVQKNMELRKESVFGHKKEEKPKEEKKG.

This sequence belongs to the bacterial ribosomal protein bL9 family. As to quaternary structure, component of the mitochondrial large ribosomal subunit (mt-LSU). Mature yeast 74S mitochondrial ribosomes consist of a small (37S) and a large (54S) subunit. The 37S small subunit contains a 15S ribosomal RNA (15S mt-rRNA) and 34 different proteins. The 54S large subunit contains a 21S rRNA (21S mt-rRNA) and 46 different proteins.

It is found in the mitochondrion. Its function is as follows. Component of the mitochondrial ribosome (mitoribosome), a dedicated translation machinery responsible for the synthesis of mitochondrial genome-encoded proteins, including at least some of the essential transmembrane subunits of the mitochondrial respiratory chain. The mitoribosomes are attached to the mitochondrial inner membrane and translation products are cotranslationally integrated into the membrane. In Saccharomyces cerevisiae (strain ATCC 204508 / S288c) (Baker's yeast), this protein is Large ribosomal subunit protein bL9m (MRPL50).